The sequence spans 218 residues: Sodium channel regulatory subunit beta-1 (218 aa).

Residues 1 to 18 (MGTLLALVVGAALVSSAW) form the signal peptide. The Extracellular segment spans residues 19–157 (GGCVEVDSET…DKANRDMASI (139 aa)). 2 cysteine pairs are disulfide-bonded: C21–C43 and C40–C121. Positions 22 to 150 (VEVDSETEAV…KIHIEVVDKA (129 aa)) constitute an Ig-like C2-type domain. N-linked (GlcNAc...) asparagine glycosylation is found at N93, N110, N114, and N135. Residues 158–179 (VSEIMMYVLIVVLTIWLVAEMV) form a helical membrane-spanning segment. Residues 180–218 (YCYKKIAAATEAAAQENASEYLAITSESKENCTGVQVAE) lie on the Cytoplasmic side of the membrane.

It belongs to the sodium channel auxiliary subunit SCN1B (TC 8.A.17) family. As to quaternary structure, a voltage-gated sodium (Nav) channel consists of an ion-conducting pore-forming alpha subunit functional on its own that is regulated by one or more beta subunits. Interacts with SCN1A; regulatory subunit of SCN1A/Nav1.1. Interacts with SCN3A; regulatory subunit of SCN3A/Nav1.3. Interacts with SCN4A; regulatory subunit of SCN4A/Nav1.4. Interacts with SCN5A; regulatory subunit of SCN5A/Nav1.5. Interacts with SCN8A; regulatory subunit of SCN8A/Nav1.6. Interacts with SCN9A; regulatory subunit of SCN9A/Nav1.7. Interacts with SCN10A; regulatory subunit of SCN10A/Nav1.8. Interacts with NFASC. Interacts with TMEM65.

The protein resides in the cell membrane. It is found in the perikaryon. Its subcellular location is the cell projection. It localises to the axon. Functionally, regulatory subunit of multiple voltage-gated sodium (Nav) channels directly mediating the depolarization of excitable membranes. Navs, also called VGSCs (voltage-gated sodium channels) or VDSCs (voltage-dependent sodium channels), operate by switching between closed and open conformations depending on the voltage difference across the membrane. In the open conformation they allow Na(+) ions to selectively pass through the pore, along their electrochemical gradient. The influx of Na+ ions provokes membrane depolarization, initiating the propagation of electrical signals throughout cells and tissues. The accessory beta subunits participate in localization and functional modulation of the Nav channels. Modulates the activity of SCN1A/Nav1.1, SCN2A/Nav1.2, SCN3A/Nav1.3, SCN4A/Nav1.4, SCN5A/Nav1.5, SCN8A/Nav1.6, SCN9A/Nav1.7 and SCN10A/Nav1.8. This is Sodium channel regulatory subunit beta-1 from Canis lupus familiaris (Dog).